Here is a 60-residue protein sequence, read N- to C-terminus: Protein P7 (60 aa).

The helical transmembrane segment at 28–48 (FIGVTLIGMFISYYLYALISI) threads the bilayer.

Its subcellular location is the host membrane. In Vitis vinifera (Grape), this protein is Protein P7.